A 423-amino-acid chain; its full sequence is UDP-N-acetylglucosamine 1-carboxyvinyltransferase (423 aa).

22–23 lines the phosphoenolpyruvate pocket; the sequence is KN. Residue Arg-93 participates in UDP-N-acetyl-alpha-D-glucosamine binding. The active-site Proton donor is Cys-117. Cys-117 bears the 2-(S-cysteinyl)pyruvic acid O-phosphothioketal mark. 2 residues coordinate UDP-N-acetyl-alpha-D-glucosamine: Asp-305 and Ile-327.

It belongs to the EPSP synthase family. MurA subfamily.

Its subcellular location is the cytoplasm. The catalysed reaction is phosphoenolpyruvate + UDP-N-acetyl-alpha-D-glucosamine = UDP-N-acetyl-3-O-(1-carboxyvinyl)-alpha-D-glucosamine + phosphate. It participates in cell wall biogenesis; peptidoglycan biosynthesis. Its function is as follows. Cell wall formation. Adds enolpyruvyl to UDP-N-acetylglucosamine. The sequence is that of UDP-N-acetylglucosamine 1-carboxyvinyltransferase from Acidithiobacillus ferrooxidans (strain ATCC 23270 / DSM 14882 / CIP 104768 / NCIMB 8455) (Ferrobacillus ferrooxidans (strain ATCC 23270)).